The following is a 273-amino-acid chain: Transposable element Tc1 transposase (273 aa).

The protein belongs to the transposase 5 family.

The protein localises to the nucleus. Probably essential for transposable element Tc1 transposition. The insertion of Tc1 is the main cause of spontaneous mutations. It is an endonuclease which can produce a single strand nick at the 5'-end of the transposon. The protein is Transposable element Tc1 transposase (tc1a) of Caenorhabditis elegans.